A 432-amino-acid polypeptide reads, in one-letter code: MAGQTIIVSGLNPAAILQSTIGGGASPTAAAAENGTRKVIPLSRDALQDFMLSIITQKLQDEKQPFYVLDLGEVVSLMDQWKSSLPNIRPFYAVKCNPEPSFLSILSAMGSNFDCASRAEIEYVLALGISPDRIVFANPCKPESDIIFAAKVGVNLTTYDSEDEVYKIRKHHPKSELLPRIKPMFDGNARCPMGPKYGALPEEVEPLLRAAQAARLTVSGVSFHIGSGDADSNAYLGAIAAAKEVFETAAKLGMSKMTVLDVGGGFTSGHQFTTAAVAVKSALKQHFDDEPELTIIAEPGRFFAETAFTLATTVIGKRVRGELREYWINDGLYGSMNCVLYDHATVNATPLAVLSNRTNVTCGGSKTFPTTVFGPTCDALDTVLRDYQLPELQVNDWLVFPNMGAYTKAAGSNFNGFNTSTIVTHLAYTYPS.

At Lys-95 the chain carries N6-(pyridoxal phosphate)lysine. Residues Ser-227, Gly-265, and 298-301 (EPGR) contribute to the pyridoxal 5'-phosphate site. A substrate-binding site is contributed by 341 to 342 (YD). Catalysis depends on Cys-377, which acts as the Proton donor; shared with dimeric partner. Asp-378 contacts substrate. Residue Tyr-406 participates in pyridoxal 5'-phosphate binding.

This sequence belongs to the Orn/Lys/Arg decarboxylase class-II family. In terms of assembly, homodimer. Only the dimer is catalytically active, as the active sites are constructed of residues from both monomers. The cofactor is pyridoxal 5'-phosphate.

The protein resides in the plastid. It localises to the chloroplast. The catalysed reaction is L-lysine + H(+) = cadaverine + CO2. It catalyses the reaction L-ornithine + H(+) = putrescine + CO2. It participates in alkaloid biosynthesis; nicotine biosynthesis. It functions in the pathway amine and polyamine biosynthesis; putrescine biosynthesis via L-ornithine pathway; putrescine from L-ornithine: step 1/1. With respect to regulation, repressed by alpha-difluoromethylornithine (DFMO), 5,5'-dithiobis-(2-nitrobenzoic acid) (DTNB) and salicylaldehyde. In terms of biological role, involved in the biosynthesis of pyridine alkaloid natural products, leading mainly to the production of anabasine, anatabine, nicotine and nornicotine, effective deterrents against herbivores with antiparasitic and pesticide properties (neurotoxins); nornicotine serves as the precursor in the synthesis of the carcinogen compound N'-nitrosonornicotine (NNN). Catalyzes the first and rate-limiting step of polyamine biosynthesis that converts ornithine into putrescine, which is the precursor for the polyamines, spermidine and spermine. Can also use, with a lower efficiency, L-lysine as substrate to produce cadaverine. Polyamines are essential for cell proliferation and are implicated in cellular processes, ranging from DNA replication to apoptosis. In Nicotiana glutinosa (Tobacco), this protein is Ornithine decarboxylase, chloroplastic.